The following is a 198-amino-acid chain: GTP cyclohydrolase 1 (198 aa).

C87, H90, and C158 together coordinate Zn(2+).

The protein belongs to the GTP cyclohydrolase I family. Homomer.

It catalyses the reaction GTP + H2O = 7,8-dihydroneopterin 3'-triphosphate + formate + H(+). It participates in cofactor biosynthesis; 7,8-dihydroneopterin triphosphate biosynthesis; 7,8-dihydroneopterin triphosphate from GTP: step 1/1. This chain is GTP cyclohydrolase 1, found in Janthinobacterium sp. (strain Marseille) (Minibacterium massiliensis).